The primary structure comprises 388 residues: F-box protein At5g42460 (388 aa).

In terms of domain architecture, F-box spans 1–47; that stretch reads MTIMSDLPRDLLAEILSRVPLTSLRAVRLTCKKWNDLSKDRSFLKKQ.

The polypeptide is F-box protein At5g42460 (Arabidopsis thaliana (Mouse-ear cress)).